A 148-amino-acid chain; its full sequence is Macrodomain Ter protein (148 aa).

Belongs to the MatP family. As to quaternary structure, homodimer.

Its subcellular location is the cytoplasm. In terms of biological role, required for spatial organization of the terminus region of the chromosome (Ter macrodomain) during the cell cycle. Prevents early segregation of duplicated Ter macrodomains during cell division. Binds specifically to matS, which is a 13 bp signature motif repeated within the Ter macrodomain. In Haemophilus influenzae (strain ATCC 51907 / DSM 11121 / KW20 / Rd), this protein is Macrodomain Ter protein.